Reading from the N-terminus, the 84-residue chain is Large ribosomal subunit protein bL27 (84 aa).

The tract at residues methionine 1–tyrosine 20 is disordered.

It belongs to the bacterial ribosomal protein bL27 family.

This chain is Large ribosomal subunit protein bL27, found in Dictyoglomus thermophilum (strain ATCC 35947 / DSM 3960 / H-6-12).